Here is a 301-residue protein sequence, read N- to C-terminus: tRNA pseudouridine synthase B (301 aa).

Catalysis depends on aspartate 38, which acts as the Nucleophile.

The protein belongs to the pseudouridine synthase TruB family. Type 1 subfamily.

It catalyses the reaction uridine(55) in tRNA = pseudouridine(55) in tRNA. Responsible for synthesis of pseudouridine from uracil-55 in the psi GC loop of transfer RNAs. The polypeptide is tRNA pseudouridine synthase B (Clostridioides difficile (strain 630) (Peptoclostridium difficile)).